Reading from the N-terminus, the 209-residue chain is Thymidylate kinase (209 aa).

ATP is bound at residue 10-17; that stretch reads GLDGAGKS.

It belongs to the thymidylate kinase family.

The enzyme catalyses dTMP + ATP = dTDP + ADP. Phosphorylation of dTMP to form dTDP in both de novo and salvage pathways of dTTP synthesis. This chain is Thymidylate kinase, found in Francisella tularensis subsp. holarctica (strain OSU18).